The chain runs to 272 residues: tRNA (guanine-N(7)-)-methyltransferase (272 aa).

Basic and acidic residues predominate over residues methionine 1–arginine 20. Positions methionine 1–tyrosine 43 are disordered. S-adenosyl-L-methionine contacts are provided by residues glycine 89, glutamate 112 to isoleucine 113, asparagine 148 to alanine 149, and cysteine 168. The active site involves aspartate 171. Threonine 246–glutamate 248 serves as a coordination point for S-adenosyl-L-methionine.

It belongs to the class I-like SAM-binding methyltransferase superfamily. TrmB family. In terms of assembly, forms a complex with TRM82.

Its subcellular location is the nucleus. It carries out the reaction guanosine(46) in tRNA + S-adenosyl-L-methionine = N(7)-methylguanosine(46) in tRNA + S-adenosyl-L-homocysteine. The protein operates within tRNA modification; N(7)-methylguanine-tRNA biosynthesis. Functionally, catalyzes the formation of N(7)-methylguanine at position 46 (m7G46) in tRNA. This chain is tRNA (guanine-N(7)-)-methyltransferase, found in Meyerozyma guilliermondii (strain ATCC 6260 / CBS 566 / DSM 6381 / JCM 1539 / NBRC 10279 / NRRL Y-324) (Yeast).